Reading from the N-terminus, the 144-residue chain is MMTQKKPIRDLIESCITKVEEHYKLKELYQRLNQGINVEEVLKETVEDYKEKMEKYILEVLEEIEKYCEYRESLHGDQKKEAEEELCECEKDLYCTIAELFELYHFFRELENLSKEQINEAVSIPVEIIYNVVLKLKGIEEKNQ.

A coiled-coil region spans residues Lys-24–Tyr-67.

This is an uncharacterized protein from Aquifex aeolicus (strain VF5).